Here is a 170-residue protein sequence, read N- to C-terminus: Tachykinin-4 (170 aa).

An N-terminal signal peptide occupies residues 1-16 (MLPLLALFLLIGPAVS). A propeptide spanning residues 17-54 (TTTRDREDLTFGAEAESWVTVNLKGIPVPSIELKLQEL) is cleaved from the precursor. M66 carries the methionine amide modification. The propeptide occupies 67 to 170 (GKRVEGVHPI…SQMMPRPSRP (104 aa)). The disordered stretch occupies residues 107 to 170 (QETNHQSAGP…SQMMPRPSRP (64 aa)). A compositionally biased stretch (polar residues) spans 123 to 140 (SLQSQRGRSEPPNHQQHV).

The protein belongs to the tachykinin family.

It localises to the secreted. Its function is as follows. Tachykinins are active peptides which excite neurons, evoke behavioral responses, are potent vasodilators and secretagogues, and contract (directly or indirectly) many smooth muscles. Hemokinin induces plasma extravasation, mast cell degranulation, muscle contraction, salivary secretion and scratching behavior. Increases sperm motility. Induces potent analgesic effects and may play a role in pain modulation. Promotes survival of bone marrow B lineage cells and of cultured LPS-stimulated pre-B cells and may act as an autocrine factor required for B-cell survival and proliferation. Lowers systemic arterial pressure following intravenous injection. Induces interferon-gamma production and may play a role in the inflammatory response. Shows potent affinity and specificity for the NK-1 receptor. This is Tachykinin-4 from Rattus norvegicus (Rat).